The primary structure comprises 123 residues: Photosystem II extrinsic protein U (123 aa).

Residues 1–28 (MKTLARILVVFTLIVGLIGFFNPLPAQA) form the signal peptide.

This sequence belongs to the PsbU family. In terms of assembly, PSII is composed of 1 copy each of membrane proteins PsbA, PsbB, PsbC, PsbD, PsbE, PsbF, PsbH, PsbI, PsbJ, PsbK, PsbL, PsbM, PsbT, PsbX, PsbY, PsbZ, Psb30/Ycf12, peripheral proteins PsbO, CyanoQ (PsbQ), PsbU, PsbV and a large number of cofactors. It forms dimeric complexes.

It is found in the cellular thylakoid membrane. Functionally, one of the extrinsic, lumenal subunits of photosystem II (PSII). PSII is a light-driven water plastoquinone oxidoreductase, using light energy to abstract electrons from H(2)O, generating a proton gradient subsequently used for ATP formation. The extrinsic proteins stabilize the structure of photosystem II oxygen-evolving complex (OEC), the ion environment of oxygen evolution and protect the OEC against heat-induced inactivation. The chain is Photosystem II extrinsic protein U from Gloeothece citriformis (strain PCC 7424) (Cyanothece sp. (strain PCC 7424)).